Consider the following 743-residue polypeptide: Catalase-peroxidase (743 aa).

The segment at methionine 1–arginine 29 is disordered. A compositionally biased stretch (gly residues) spans asparagine 8–alanine 19. Residues tryptophan 100 to tyrosine 222 constitute a cross-link (tryptophyl-tyrosyl-methioninium (Trp-Tyr) (with M-248)). Histidine 101 acts as the Proton acceptor in catalysis. Residues tyrosine 222–methionine 248 constitute a cross-link (tryptophyl-tyrosyl-methioninium (Tyr-Met) (with W-100)). Histidine 263 contributes to the heme b binding site.

It belongs to the peroxidase family. Peroxidase/catalase subfamily. In terms of assembly, homodimer or homotetramer. Heme b is required as a cofactor. In terms of processing, formation of the three residue Trp-Tyr-Met cross-link is important for the catalase, but not the peroxidase activity of the enzyme.

The catalysed reaction is H2O2 + AH2 = A + 2 H2O. It carries out the reaction 2 H2O2 = O2 + 2 H2O. In terms of biological role, bifunctional enzyme with both catalase and broad-spectrum peroxidase activity. The chain is Catalase-peroxidase from Stutzerimonas stutzeri (strain A1501) (Pseudomonas stutzeri).